A 244-amino-acid chain; its full sequence is Pyridoxine 5'-phosphate synthase (244 aa).

Residue Asn-9 coordinates 3-amino-2-oxopropyl phosphate. 11–12 (DH) provides a ligand contact to 1-deoxy-D-xylulose 5-phosphate. 3-amino-2-oxopropyl phosphate is bound at residue Arg-20. Residue His-45 is the Proton acceptor of the active site. Positions 47 and 52 each coordinate 1-deoxy-D-xylulose 5-phosphate. The Proton acceptor role is filled by Glu-72. 1-deoxy-D-xylulose 5-phosphate is bound at residue Thr-102. Residue His-193 is the Proton donor of the active site. 3-amino-2-oxopropyl phosphate contacts are provided by residues Gly-194 and 215-216 (GH).

This sequence belongs to the PNP synthase family. Homooctamer; tetramer of dimers.

It is found in the cytoplasm. The catalysed reaction is 3-amino-2-oxopropyl phosphate + 1-deoxy-D-xylulose 5-phosphate = pyridoxine 5'-phosphate + phosphate + 2 H2O + H(+). The protein operates within cofactor biosynthesis; pyridoxine 5'-phosphate biosynthesis; pyridoxine 5'-phosphate from D-erythrose 4-phosphate: step 5/5. Its function is as follows. Catalyzes the complicated ring closure reaction between the two acyclic compounds 1-deoxy-D-xylulose-5-phosphate (DXP) and 3-amino-2-oxopropyl phosphate (1-amino-acetone-3-phosphate or AAP) to form pyridoxine 5'-phosphate (PNP) and inorganic phosphate. The protein is Pyridoxine 5'-phosphate synthase of Blochmanniella pennsylvanica (strain BPEN).